Here is a 275-residue protein sequence, read N- to C-terminus: Hydroxyethylthiazole kinase (275 aa).

Met50 provides a ligand contact to substrate. Residues Arg126 and Ser171 each coordinate ATP. Position 200 (Ala200) interacts with substrate.

It belongs to the Thz kinase family. Requires Mg(2+) as cofactor.

The catalysed reaction is 5-(2-hydroxyethyl)-4-methylthiazole + ATP = 4-methyl-5-(2-phosphooxyethyl)-thiazole + ADP + H(+). It functions in the pathway cofactor biosynthesis; thiamine diphosphate biosynthesis; 4-methyl-5-(2-phosphoethyl)-thiazole from 5-(2-hydroxyethyl)-4-methylthiazole: step 1/1. Its function is as follows. Catalyzes the phosphorylation of the hydroxyl group of 4-methyl-5-beta-hydroxyethylthiazole (THZ). The protein is Hydroxyethylthiazole kinase of Acinetobacter baumannii (strain AB307-0294).